The sequence spans 124 residues: MNNLIFVALGGSIGAVFRYLISIFMIQVFGSSFPFGTLMVNVIGSFLMGVIYALGEASQVSPEIKALVGVGLLGALTTFSTFSNETLLLMQQGAWLKAFTNIALNLCLCLFMVYLGQQLVFSRI.

A run of 4 helical transmembrane segments spans residues 4–24 (LIFV…ISIF), 35–55 (FGTL…YALG), 62–82 (PEIK…FSTF), and 102–122 (IALN…LVFS). Na(+) is bound by residues Gly74 and Thr77.

It belongs to the fluoride channel Fluc/FEX (TC 1.A.43) family.

Its subcellular location is the cell inner membrane. The enzyme catalyses fluoride(in) = fluoride(out). Its activity is regulated as follows. Na(+) is not transported, but it plays an essential structural role and its presence is essential for fluoride channel function. Fluoride-specific ion channel. Important for reducing fluoride concentration in the cell, thus reducing its toxicity. This Shewanella loihica (strain ATCC BAA-1088 / PV-4) protein is Fluoride-specific ion channel FluC.